A 293-amino-acid chain; its full sequence is ATP synthase gamma chain (293 aa).

Belongs to the ATPase gamma chain family. F-type ATPases have 2 components, CF(1) - the catalytic core - and CF(0) - the membrane proton channel. CF(1) has five subunits: alpha(3), beta(3), gamma(1), delta(1), epsilon(1). CF(0) has three main subunits: a, b and c.

It is found in the cell membrane. Functionally, produces ATP from ADP in the presence of a proton gradient across the membrane. The gamma chain is believed to be important in regulating ATPase activity and the flow of protons through the CF(0) complex. The chain is ATP synthase gamma chain from Streptococcus gordonii (strain Challis / ATCC 35105 / BCRC 15272 / CH1 / DL1 / V288).